A 226-amino-acid polypeptide reads, in one-letter code: 7-cyano-7-deazaguanine synthase (226 aa).

10-20 (LSGGLDSATAA) provides a ligand contact to ATP. Zn(2+) is bound by residues cysteine 191, cysteine 199, cysteine 202, and cysteine 205.

It belongs to the QueC family. It depends on Zn(2+) as a cofactor.

The enzyme catalyses 7-carboxy-7-deazaguanine + NH4(+) + ATP = 7-cyano-7-deazaguanine + ADP + phosphate + H2O + H(+). It functions in the pathway purine metabolism; 7-cyano-7-deazaguanine biosynthesis. Its function is as follows. Catalyzes the ATP-dependent conversion of 7-carboxy-7-deazaguanine (CDG) to 7-cyano-7-deazaguanine (preQ(0)). The chain is 7-cyano-7-deazaguanine synthase from Synechococcus sp. (strain CC9902).